Consider the following 331-residue polypeptide: UPF0194 membrane protein YbhG (331 aa).

The first 19 residues, 1-19 (MKKPVVIGLAIAAIVAVIA), serve as a signal peptide directing secretion. Residues 107-208 (EEIAQAAAAV…LDLQDTTLIA (102 aa)) adopt a coiled-coil conformation.

The protein belongs to the UPF0194 family.

It localises to the periplasm. This chain is UPF0194 membrane protein YbhG, found in Salmonella agona (strain SL483).